A 435-amino-acid chain; its full sequence is tRNA modification GTPase MnmE (435 aa).

(6S)-5-formyl-5,6,7,8-tetrahydrofolate contacts are provided by Arg-24, Glu-85, and Arg-124. Positions Gly-220–Arg-361 constitute a TrmE-type G domain. Asn-230 provides a ligand contact to K(+). Residues Asn-230 to Ser-235, Ser-249 to Thr-255, and Asp-274 to Gly-277 contribute to the GTP site. Mg(2+) is bound at residue Ser-234. K(+) contacts are provided by Ser-249, Ile-251, and Thr-254. Thr-255 contributes to the Mg(2+) binding site. Residue Lys-435 coordinates (6S)-5-formyl-5,6,7,8-tetrahydrofolate.

The protein belongs to the TRAFAC class TrmE-Era-EngA-EngB-Septin-like GTPase superfamily. TrmE GTPase family. As to quaternary structure, homodimer. Heterotetramer of two MnmE and two MnmG subunits. It depends on K(+) as a cofactor.

Its subcellular location is the cytoplasm. Functionally, exhibits a very high intrinsic GTPase hydrolysis rate. Involved in the addition of a carboxymethylaminomethyl (cmnm) group at the wobble position (U34) of certain tRNAs, forming tRNA-cmnm(5)s(2)U34. The sequence is that of tRNA modification GTPase MnmE from Gluconacetobacter diazotrophicus (strain ATCC 49037 / DSM 5601 / CCUG 37298 / CIP 103539 / LMG 7603 / PAl5).